Reading from the N-terminus, the 487-residue chain is (S)-N-methylcoclaurine 3'-hydroxylase isozyme 1 (487 aa).

The helical transmembrane segment at 4–24 threads the bilayer; it reads TVALIAVIISSILYLLFGGSG. Residue cysteine 429 coordinates heme.

This sequence belongs to the cytochrome P450 family. Requires heme as cofactor.

Its subcellular location is the endoplasmic reticulum membrane. The protein resides in the microsome membrane. The catalysed reaction is (S)-N-methylcoclaurine + reduced [NADPH--hemoprotein reductase] + O2 = (S)-3'-hydroxy-N-methylcoclaurine + oxidized [NADPH--hemoprotein reductase] + H2O + H(+). It participates in alkaloid biosynthesis; (S)-reticuline biosynthesis; (S)-reticuline from (S)-norcoclaurine: step 3/4. Its function is as follows. 3'-hydroxylation of (S)-N-methylcoclaurine. The sequence is that of (S)-N-methylcoclaurine 3'-hydroxylase isozyme 1 (CYP80B1) from Eschscholzia californica (California poppy).